A 68-amino-acid polypeptide reads, in one-letter code: Cytotoxic linear peptide IsCT (68 aa).

Positions 1 to 23 are cleaved as a signal peptide; that stretch reads MKTQFAILLVALVLFQMFAQSDA. Residue Phe36 is modified to Phenylalanine amide. Positions 40-68 are excised as a propeptide; it reads GLSDLDGLDELFDGEISKADRDFLRELMR.

Belongs to the non-disulfide-bridged peptide (NDBP) superfamily. Short antimicrobial peptide (group 4) family. In terms of processing, isCTf is an enzymatic proteolytic cleavage product of IsCT by the proteases present in the venom. In terms of tissue distribution, expressed by the venom gland.

The protein resides in the secreted. The protein localises to the target cell membrane. Functionally, shows weak hemolytic activity and antibacterial activity against both Gram-positive and Gram-negative bacteria probably by forming pores in the cell membrane. IsCT adopts an amphipathic alpha-helical structure. In terms of biological role, shows neither hemolytic, nor antibacterial activities, probably because it cannot adopt amphipathic alpha-helical structure. This chain is Cytotoxic linear peptide IsCT, found in Opisthacanthus madagascariensis (Scorpion).